Here is a 940-residue protein sequence, read N- to C-terminus: PTS system glucose-specific EIICBA component (940 aa).

The region spanning 1–284 is the PTS EIIC type-1; first part domain; sequence MQIKAQDTGQ…YAPLWYTSAG (284 aa). 5 helical membrane passes run 43 to 63, 83 to 103, 112 to 132, 175 to 195, and 209 to 229; these read LMIP…GDAI, GGDV…AITF, FSAF…ILPF, VFGG…FYAI, and FVPI…LMIW. Residues 285–478 are unknown; it reads GSLQEIVNQQ…VNSFRVAVES (194 aa). A PTS EIIC type-1; second part domain is found at 479–630; the sequence is LNPAQYSQGK…FNLATPGRGG (152 aa). A run of 5 helical transmembrane segments spans residues 487-507, 515-535, 537-557, 564-584, and 598-618; these read GKFP…ILAA, AASI…TEPF, FTFL…LAAV, ILGA…ILYG, and LVPI…YFLI. Positions 661–743 constitute a PTS EIIB type-1 domain; sequence QIEAGILLQA…QDIIQGKVNW (83 aa). Cys-683 serves as the catalytic Phosphocysteine intermediate; for EIIB activity. The 114-residue stretch at 794-907 folds into the PTS EIIA type-1 domain; sequence DETFKQKLVG…NPITPFVVMK (114 aa). Residue His-847 is the Tele-phosphohistidine intermediate; for EIIA activity of the active site.

Its subcellular location is the cell membrane. It catalyses the reaction N(pros)-phospho-L-histidyl-[protein] + D-glucose(out) = D-glucose 6-phosphate(in) + L-histidyl-[protein]. Functionally, the phosphoenolpyruvate-dependent sugar phosphotransferase system (sugar PTS), a major carbohydrate active transport system, catalyzes the phosphorylation of incoming sugar substrates concomitantly with their translocation across the cell membrane. This system is involved in glucose transport. The protein is PTS system glucose-specific EIICBA component (ptsG) of Mycoplasma pneumoniae (strain ATCC 29342 / M129 / Subtype 1) (Mycoplasmoides pneumoniae).